The sequence spans 102 residues: Small ribosomal subunit protein uS10 (102 aa).

The protein belongs to the universal ribosomal protein uS10 family. As to quaternary structure, part of the 30S ribosomal subunit.

Its function is as follows. Involved in the binding of tRNA to the ribosomes. In Macrococcus caseolyticus (strain JCSC5402) (Macrococcoides caseolyticum), this protein is Small ribosomal subunit protein uS10.